The following is a 282-amino-acid chain: 3-methyl-2-oxobutanoate hydroxymethyltransferase (282 aa).

Residues Asp-46 and Asp-85 each coordinate Mg(2+). 3-methyl-2-oxobutanoate-binding positions include 46 to 47 (DS), Asp-85, and Lys-115. Glu-117 serves as a coordination point for Mg(2+). The active-site Proton acceptor is Glu-184.

This sequence belongs to the PanB family. In terms of assembly, homodecamer; pentamer of dimers. Mg(2+) is required as a cofactor.

The protein resides in the cytoplasm. It catalyses the reaction 3-methyl-2-oxobutanoate + (6R)-5,10-methylene-5,6,7,8-tetrahydrofolate + H2O = 2-dehydropantoate + (6S)-5,6,7,8-tetrahydrofolate. Its pathway is cofactor biosynthesis; (R)-pantothenate biosynthesis; (R)-pantoate from 3-methyl-2-oxobutanoate: step 1/2. Functionally, catalyzes the reversible reaction in which hydroxymethyl group from 5,10-methylenetetrahydrofolate is transferred onto alpha-ketoisovalerate to form ketopantoate. This Alkaliphilus metalliredigens (strain QYMF) protein is 3-methyl-2-oxobutanoate hydroxymethyltransferase.